The sequence spans 1283 residues: Bifunctional dioxygenase (DOX)-epoxy alcohol synthase (EAS) (1283 aa).

A disordered region spans residues 1-64 (MAEHKNGVAT…LPKEMGDGSY (64 aa)). A fatty acid alpha-dioxygenase region spans residues 130-476 (TNSFISQLWN…DGKFNDDELV (347 aa)). Heme b is bound at residue histidine 227. Tyrosine 405 is an active-site residue. Residue histidine 408 participates in heme b binding. The tract at residues 684-1108 (INIIGYNAAK…WDDGCGTDLF (425 aa)) is epoxy alcohol synthase. Cysteine 1035 contributes to the heme binding site.

In the N-terminal section; belongs to the peroxidase family. This sequence in the C-terminal section; belongs to the cytochrome P450 family. As to quaternary structure, homotetramer. Heme b is required as a cofactor. The cofactor is heme.

The enzyme catalyses (9Z,12Z)-octadecadienoate + O2 = (8E,10R,12Z)-10-hydroperoxyoctadeca-8,12-dienoate. It catalyses the reaction (8E,10R,12Z)-10-hydroperoxyoctadeca-8,12-dienoate = (12S,13R)-epoxy-(10R)-hydroxy-(8E)-octadecenoate. The catalysed reaction is (9Z)-octadecenoate + O2 = (8R)-hydroperoxy-(9Z)-octadecenoate. In terms of biological role, bifunctional dioxygenase (DOX)-epoxy alcohol synthase (EAS) that converts linoleic acid (18:2n-6) sequentially to 10(R)-hydroperoxy-8(E),12(Z)-octadecadienoic acid (10R-HPODE) and 10R-HPODE further to 12(13)-epoxy-10-hydroxy-8(E)-octa-decenoic acid as the end product. Linoleic acid is oxidized mainly to the R stereoisomer of 10-HPODE. The dioxygenase domain is also able to oygenate position C-8 of linoleic acid to produce 8(R)-hydroperoxy-8(E),12(Z)-octadecadienoic acid (8R-HPODE). The sequence is that of Bifunctional dioxygenase (DOX)-epoxy alcohol synthase (EAS) from Fusarium oxysporum (strain Fo5176) (Fusarium vascular wilt).